Consider the following 336-residue polypeptide: Calcium uniporter regulatory subunit MCUb, mitochondrial (336 aa).

Residues M1–L35 constitute a mitochondrion transit peptide. Positions E179–E210 form a coiled coil. The next 2 membrane-spanning stretches (helical) occupy residues L220–W240 and P250–T270. Positions F297 to L323 form a coiled coil.

This sequence belongs to the MCU (TC 1.A.77) family. Homooligomer. Associates with the uniplex complex, composed of MCU, MICU1, MICU2 and EMRE/SMDT1, inhibiting its activity.

It is found in the mitochondrion inner membrane. Negative regulator of the mitochondrial calcium uniporter (MCU), a channel that mediates calcium uptake into the mitochondrial matrix. MCUB is required to limit mitochondrial calcium overload during stress. Acts as a dominant-negative regulator that displaces MCU from the functional uniplex complex and thereby decreases the association of calcium sensors MICU1 and MICU2, preventing channel gating. Mitochondrial calcium homeostasis plays key roles in mitochondrial metabolism. Acts as an important regulator of mitochondrial metabolism in response to stress in muscle cells: induced in response to fasting, leading to restrict mitochondrial calcium uptake, resulting in reprogramming of mitochondria toward fatty acid oxidation preference. Acts as a regulator of macrophage polarization during skeletal muscle regeneration: inhibition of mitochondrial calcium uptake drives differentiation of macrophages with anti-inflammatory profile, promoting the differentiation and fusion of satellite cells. The sequence is that of Calcium uniporter regulatory subunit MCUb, mitochondrial from Homo sapiens (Human).